The chain runs to 151 residues: UPAR/Ly6 domain-containing protein crok (151 aa).

Positions 1–23 (MKTLEKYILFAIVLCCLLQLGQA) are cleaved as a signal peptide. Over 24 to 128 (IKCWDCRSDN…KDGCNSAGIH (105 aa)) the chain is Lumenal. Disulfide bonds link C26–C68, C29–C37, C51–C85, C100–C114, and C116–C122. N43 carries N-linked (GlcNAc...) asparagine glycosylation. S124 is lipidated: GPI-anchor amidated serine. Positions 125–151 (AGIHRLGLMGVLTGTLLSVIVAHLLRQ) are cleaved as a propeptide — removed in mature form. The helical transmembrane segment at 129–149 (RLGLMGVLTGTLLSVIVAHLL) threads the bilayer. The Cytoplasmic segment spans residues 150-151 (RQ).

Belongs to the quiver family.

The protein localises to the vesicle. It localises to the membrane. It is found in the endomembrane system. Functionally, required for septate junction assembly, possibly by organizing the preassembly and transport of septate junction proteins including dlg1/disks large 1 and Nrx-IV/Neurexin-IV. Involved in paracellular barrier functions of trachea, hindgut and salivary gland mediated by epithelial cell septate junctions. This Drosophila melanogaster (Fruit fly) protein is UPAR/Ly6 domain-containing protein crok.